Reading from the N-terminus, the 514-residue chain is Histidine ammonia-lyase (514 aa).

Residues 142 to 144 (ASG) constitute a cross-link (5-imidazolinone (Ala-Gly)). S143 bears the 2,3-didehydroalanine (Ser) mark.

This sequence belongs to the PAL/histidase family. In terms of processing, contains an active site 4-methylidene-imidazol-5-one (MIO), which is formed autocatalytically by cyclization and dehydration of residues Ala-Ser-Gly.

The protein localises to the cytoplasm. It catalyses the reaction L-histidine = trans-urocanate + NH4(+). The protein operates within amino-acid degradation; L-histidine degradation into L-glutamate; N-formimidoyl-L-glutamate from L-histidine: step 1/3. The chain is Histidine ammonia-lyase from Sorangium cellulosum (strain So ce56) (Polyangium cellulosum (strain So ce56)).